The following is a 245-amino-acid chain: Flavin mononucleotide hydrolase 1, chloroplatic (245 aa).

A chloroplast-targeting transit peptide spans 1 to 26; it reads MAAAAMHTSAEFINLKPNMWKKNPVR.

The protein belongs to the HAD-like hydrolase superfamily. DOG/GPP family. Homodimer. Mg(2+) is required as a cofactor.

The protein resides in the plastid. The protein localises to the chloroplast stroma. The catalysed reaction is FMN + H2O = riboflavin + phosphate. The enzyme catalyses 5-amino-6-(5-phospho-D-ribitylamino)uracil + H2O = 5-amino-6-(D-ribitylamino)uracil + phosphate. Functionally, FMN hydrolase that catalyzes the dephosphorylation of flavin mononucleotide (FMN) to riboflavin. Can also dephosphorylate 5-amino-6-(5-phospho-D-ribitylamino)uracil, also known as ARPP. Not required for riboflavin biosynthesis in planta, but may help maintaining flavin homeostasis within chloroplasts. This Arabidopsis thaliana (Mouse-ear cress) protein is Flavin mononucleotide hydrolase 1, chloroplatic.